The following is a 156-amino-acid chain: Small ribosomal subunit protein uS7 (156 aa).

The protein belongs to the universal ribosomal protein uS7 family. In terms of assembly, part of the 30S ribosomal subunit. Contacts proteins S9 and S11.

Functionally, one of the primary rRNA binding proteins, it binds directly to 16S rRNA where it nucleates assembly of the head domain of the 30S subunit. Is located at the subunit interface close to the decoding center, probably blocks exit of the E-site tRNA. The polypeptide is Small ribosomal subunit protein uS7 (Lactobacillus helveticus (strain DPC 4571)).